The sequence spans 283 residues: Formamidopyrimidine-DNA glycosylase (283 aa).

Catalysis depends on Pro-2, which acts as the Schiff-base intermediate with DNA. The active-site Proton donor is the Glu-3. Catalysis depends on Lys-60, which acts as the Proton donor; for beta-elimination activity. 3 residues coordinate DNA: His-100, Arg-119, and Arg-164. The FPG-type zinc finger occupies 249 to 283 (WVYGRENKPCRKCGVKILKAKVAGRGTHWCPNCQK). The active-site Proton donor; for delta-elimination activity is Arg-273.

Belongs to the FPG family. Monomer. Zn(2+) serves as cofactor.

It carries out the reaction Hydrolysis of DNA containing ring-opened 7-methylguanine residues, releasing 2,6-diamino-4-hydroxy-5-(N-methyl)formamidopyrimidine.. It catalyses the reaction 2'-deoxyribonucleotide-(2'-deoxyribose 5'-phosphate)-2'-deoxyribonucleotide-DNA = a 3'-end 2'-deoxyribonucleotide-(2,3-dehydro-2,3-deoxyribose 5'-phosphate)-DNA + a 5'-end 5'-phospho-2'-deoxyribonucleoside-DNA + H(+). Its function is as follows. Involved in base excision repair of DNA damaged by oxidation or by mutagenic agents. Acts as a DNA glycosylase that recognizes and removes damaged bases. Has a preference for oxidized purines, such as 7,8-dihydro-8-oxoguanine (8-oxoG). Has AP (apurinic/apyrimidinic) lyase activity and introduces nicks in the DNA strand. Cleaves the DNA backbone by beta-delta elimination to generate a single-strand break at the site of the removed base with both 3'- and 5'-phosphates. In Prochlorococcus marinus (strain SARG / CCMP1375 / SS120), this protein is Formamidopyrimidine-DNA glycosylase.